The chain runs to 273 residues: 1,4-dihydroxy-2-naphthoyl-CoA synthase (273 aa).

Substrate contacts are provided by residues Arg-34, 73–77 (SGGDQ), Tyr-85, 117–121 (YAVGG), Thr-143, Ser-149, Tyr-246, and Lys-261. 142 to 144 (QTG) contacts hydrogencarbonate. Over residues 254 to 265 (GRDAFKEKRDPD) the composition is skewed to basic and acidic residues. Positions 254-273 (GRDAFKEKRDPDFDQFPKFP) are disordered.

This sequence belongs to the enoyl-CoA hydratase/isomerase family. MenB subfamily. It depends on hydrogencarbonate as a cofactor.

The catalysed reaction is 2-succinylbenzoyl-CoA + H(+) = 1,4-dihydroxy-2-naphthoyl-CoA + H2O. Its pathway is quinol/quinone metabolism; 1,4-dihydroxy-2-naphthoate biosynthesis; 1,4-dihydroxy-2-naphthoate from chorismate: step 6/7. The protein operates within quinol/quinone metabolism; menaquinone biosynthesis. Its function is as follows. Converts o-succinylbenzoyl-CoA (OSB-CoA) to 1,4-dihydroxy-2-naphthoyl-CoA (DHNA-CoA). This is 1,4-dihydroxy-2-naphthoyl-CoA synthase from Staphylococcus aureus (strain Mu50 / ATCC 700699).